Consider the following 231-residue polypeptide: MPVKLAQALANSLFPELDSQLRAGRHIGIDDLDNHAYLMDFQEQLEEFYARYNVELIRAPEGFFYLRPRSTTLIPRSVLSELDMMVGKILCYLYLSPERLANQGIFTAQELYEELISLADEGKLMKFVNQRSSGSDLDKQKLQEKVRTTLNRLRRLGMVYILPNDNNKFTITEAVFRFGADVRSGDDPREVQLRMIRDGEAMPIEGGLSLDDSENDETSDNSAEGTGDEQP.

The segment at 197–231 (RDGEAMPIEGGLSLDDSENDETSDNSAEGTGDEQP) is disordered.

Belongs to the MukE family. Interacts, and probably forms a ternary complex, with MukF and MukB. The complex formation is stimulated by calcium or magnesium.

It is found in the cytoplasm. The protein localises to the nucleoid. Its function is as follows. Involved in chromosome condensation, segregation and cell cycle progression. May participate in facilitating chromosome segregation by condensation DNA from both sides of a centrally located replisome during cell division. Probably acts via its interaction with MukB and MukF. In Photorhabdus laumondii subsp. laumondii (strain DSM 15139 / CIP 105565 / TT01) (Photorhabdus luminescens subsp. laumondii), this protein is Chromosome partition protein MukE.